A 475-amino-acid chain; its full sequence is Aspartyl/glutamyl-tRNA(Asn/Gln) amidotransferase subunit B (475 aa).

The protein belongs to the GatB/GatE family. GatB subfamily. Heterotrimer of A, B and C subunits.

It carries out the reaction L-glutamyl-tRNA(Gln) + L-glutamine + ATP + H2O = L-glutaminyl-tRNA(Gln) + L-glutamate + ADP + phosphate + H(+). The enzyme catalyses L-aspartyl-tRNA(Asn) + L-glutamine + ATP + H2O = L-asparaginyl-tRNA(Asn) + L-glutamate + ADP + phosphate + 2 H(+). Functionally, allows the formation of correctly charged Asn-tRNA(Asn) or Gln-tRNA(Gln) through the transamidation of misacylated Asp-tRNA(Asn) or Glu-tRNA(Gln) in organisms which lack either or both of asparaginyl-tRNA or glutaminyl-tRNA synthetases. The reaction takes place in the presence of glutamine and ATP through an activated phospho-Asp-tRNA(Asn) or phospho-Glu-tRNA(Gln). The protein is Aspartyl/glutamyl-tRNA(Asn/Gln) amidotransferase subunit B of Staphylococcus saprophyticus subsp. saprophyticus (strain ATCC 15305 / DSM 20229 / NCIMB 8711 / NCTC 7292 / S-41).